A 539-amino-acid chain; its full sequence is Phosphoenolpyruvate carboxykinase (ATP) (539 aa).

3 residues coordinate substrate: arginine 64, tyrosine 206, and lysine 212. Residues lysine 212, histidine 231, and 247-255 (GLSGTGKTT) contribute to the ATP site. The Mn(2+) site is built by lysine 212 and histidine 231. A Mn(2+)-binding site is contributed by aspartate 268. ATP is bound by residues glutamate 296, arginine 332, 448-449 (RI), and threonine 454. Arginine 332 contributes to the substrate binding site.

This sequence belongs to the phosphoenolpyruvate carboxykinase (ATP) family. As to quaternary structure, monomer. Requires Mn(2+) as cofactor.

Its subcellular location is the cytoplasm. It catalyses the reaction oxaloacetate + ATP = phosphoenolpyruvate + ADP + CO2. The protein operates within carbohydrate biosynthesis; gluconeogenesis. Functionally, involved in the gluconeogenesis. Catalyzes the conversion of oxaloacetate (OAA) to phosphoenolpyruvate (PEP) through direct phosphoryl transfer between the nucleoside triphosphate and OAA. The chain is Phosphoenolpyruvate carboxykinase (ATP) from Erwinia tasmaniensis (strain DSM 17950 / CFBP 7177 / CIP 109463 / NCPPB 4357 / Et1/99).